The sequence spans 302 residues: Glycine--tRNA ligase alpha subunit (302 aa).

Belongs to the class-II aminoacyl-tRNA synthetase family. Tetramer of two alpha and two beta subunits.

Its subcellular location is the cytoplasm. It catalyses the reaction tRNA(Gly) + glycine + ATP = glycyl-tRNA(Gly) + AMP + diphosphate. The sequence is that of Glycine--tRNA ligase alpha subunit from Xanthomonas euvesicatoria pv. vesicatoria (strain 85-10) (Xanthomonas campestris pv. vesicatoria).